The chain runs to 364 residues: 3-isopropylmalate dehydrogenase (364 aa).

Residue 79 to 92 (GPKWEHLPPDQQPE) coordinates NAD(+). 4 residues coordinate substrate: arginine 100, arginine 110, arginine 139, and aspartate 228. Positions 228, 252, and 256 each coordinate Mg(2+). 286-298 (GSAPDIAGKNIAN) contacts NAD(+).

This sequence belongs to the isocitrate and isopropylmalate dehydrogenases family. LeuB type 1 subfamily. In terms of assembly, homodimer. The cofactor is Mg(2+). It depends on Mn(2+) as a cofactor.

The protein localises to the cytoplasm. It carries out the reaction (2R,3S)-3-isopropylmalate + NAD(+) = 4-methyl-2-oxopentanoate + CO2 + NADH. It participates in amino-acid biosynthesis; L-leucine biosynthesis; L-leucine from 3-methyl-2-oxobutanoate: step 3/4. Its function is as follows. Catalyzes the oxidation of 3-carboxy-2-hydroxy-4-methylpentanoate (3-isopropylmalate) to 3-carboxy-4-methyl-2-oxopentanoate. The product decarboxylates to 4-methyl-2 oxopentanoate. The protein is 3-isopropylmalate dehydrogenase of Escherichia coli (strain UTI89 / UPEC).